The following is a 95-amino-acid chain: Neutrophil antibiotic peptide NP-5 (95 aa).

The first 19 residues, 1-19 (MRTLALLAAILLVTLQAQA), serve as a signal peptide directing secretion. Residues 20-62 (ELHSGMADDGVDQQQPRAQDLDVAVYIKQDETSPLEVLGAKAG) constitute a propeptide that is removed on maturation. 3 disulfides stabilise this stretch: Cys-65/Cys-93, Cys-67/Cys-82, and Cys-72/Cys-92.

It belongs to the alpha-defensin family.

It localises to the secreted. Its function is as follows. Microbicidal activity. The sequence is that of Neutrophil antibiotic peptide NP-5 from Oryctolagus cuniculus (Rabbit).